A 366-amino-acid polypeptide reads, in one-letter code: Homer protein homolog 1 (366 aa).

Positions 1 to 110 constitute a WH1 domain; it reads MGEQPIFSTR…EKFQEFKEAA (110 aa). G2 carries the post-translational modification N-acetylglycine. The segment at 114–189 is disordered; that stretch reads KEKSQEKMEL…RTQGLSHASS (76 aa). Polar residues predominate over residues 138 to 147; it reads SPLTPESING. A coiled-coil region spans residues 193 to 364; it reads KHWEAELATL…LRDNLAKLLE (172 aa). Residues 302 to 366 are required for tetramerization; sequence KLQEVEIRNK…DNLAKLLECS (65 aa). S318 is subject to Phosphoserine.

The protein belongs to the Homer family. In terms of assembly, tetramer; this tetrameric structure is critical for forming the high-order complex with SHANK1, which in turn is necessary for the structural and functional integrity of dendritic spines. Interacts with GRM1, GRM5, ITPR1, DYN3, RYR1, RYR2 and SHANK3. Interacts with IFT57 and OPHN1. Isoform 1 and isoform 2 encode coiled-coil structures that mediate homo- and heteromultimerization. Interacts with SHANK1; forms high-order polymerized complex with a mesh-like network structure, at least composed of SHANK1, HOMER1 and DLGAP1; the complex formation is SHANK1 multimerization dependent. Interacts with NFATC4. Interacts with DAGLA (via PPXXF motif); this interaction is required for the cell membrane localization of DAGLA. Interacts with SRGAP2. In terms of tissue distribution, highly expressed in cortex, Purkinje cells of the cerebellum, hippocampus, striatum and olfactory bulb. Isoform 1 and isoform 3 are expressed in skeletal and cardiac muscle.

The protein resides in the cytoplasm. It localises to the postsynaptic density. It is found in the synapse. Its subcellular location is the cell projection. The protein localises to the dendritic spine. Postsynaptic density scaffolding protein. Binds and cross-links cytoplasmic regions of GRM1, GRM5, ITPR1, DNM3, RYR1, RYR2, SHANK1 and SHANK3. By physically linking GRM1 and GRM5 with ER-associated ITPR1 receptors, it aids the coupling of surface receptors to intracellular calcium release. May also couple GRM1 to PI3 kinase through its interaction with AGAP2. Differentially regulates the functions of the calcium activated channel ryanodine receptors RYR1 and RYR2. Isoform 1 decreases the activity of RYR2, and increases the activity of RYR1, whereas isoform 3 counteracts the effects by competing for binding sites. Isoform 1 regulates the trafficking and surface expression of GRM5. Isoform 3 acts as a natural dominant negative, in dynamic competition with constitutively expressed isoform 1, and isoform 2 to regulate synaptic metabotropic glutamate function. Isoform 3, may be involved in the structural changes that occur at synapses during long-lasting neuronal plasticity and development. Forms a high-order complex with SHANK1, which in turn is necessary for the structural and functional integrity of dendritic spines. Negatively regulates T cell activation by inhibiting the calcineurin-NFAT pathway. Acts by competing with calcineurin/PPP3CA for NFAT protein binding, hence preventing NFAT activation by PPP3CA. The sequence is that of Homer protein homolog 1 from Rattus norvegicus (Rat).